A 160-amino-acid chain; its full sequence is tRNA (cytidine(34)-2'-O)-methyltransferase (160 aa).

S-adenosyl-L-methionine is bound by residues leucine 78, glycine 100, isoleucine 120, and serine 128.

This sequence belongs to the class IV-like SAM-binding methyltransferase superfamily. RNA methyltransferase TrmH family. TrmL subfamily. Homodimer.

The protein resides in the cytoplasm. It catalyses the reaction cytidine(34) in tRNA + S-adenosyl-L-methionine = 2'-O-methylcytidine(34) in tRNA + S-adenosyl-L-homocysteine + H(+). It carries out the reaction 5-carboxymethylaminomethyluridine(34) in tRNA(Leu) + S-adenosyl-L-methionine = 5-carboxymethylaminomethyl-2'-O-methyluridine(34) in tRNA(Leu) + S-adenosyl-L-homocysteine + H(+). Methylates the ribose at the nucleotide 34 wobble position in the two leucyl isoacceptors tRNA(Leu)(CmAA) and tRNA(Leu)(cmnm5UmAA). Catalyzes the methyl transfer from S-adenosyl-L-methionine to the 2'-OH of the wobble nucleotide. The polypeptide is tRNA (cytidine(34)-2'-O)-methyltransferase (Beijerinckia indica subsp. indica (strain ATCC 9039 / DSM 1715 / NCIMB 8712)).